We begin with the raw amino-acid sequence, 41 residues long: Entericidin A (41 aa).

The N-terminal stretch at 1–18 (MMKRLIVLVLLASTLLTG) is a signal peptide. The N-palmitoyl cysteine moiety is linked to residue C19. C19 carries S-diacylglycerol cysteine lipidation.

This sequence belongs to the EcnA/EcnB lipoprotein family.

It is found in the cell membrane. Functionally, acts as antidote to the effect of entericidin B. The polypeptide is Entericidin A (ecnA) (Escherichia coli O157:H7).